We begin with the raw amino-acid sequence, 283 residues long: Protein/nucleic acid deglycase HchA (283 aa).

The Zn(2+) site is built by histidine 86, glutamate 91, and histidine 123. The active-site Nucleophile is cysteine 185.

It belongs to the peptidase C56 family. HchA subfamily. As to quaternary structure, homodimer.

It localises to the cytoplasm. It carries out the reaction N(omega)-(1-hydroxy-2-oxopropyl)-L-arginyl-[protein] + H2O = lactate + L-arginyl-[protein] + H(+). The enzyme catalyses N(6)-(1-hydroxy-2-oxopropyl)-L-lysyl-[protein] + H2O = lactate + L-lysyl-[protein] + H(+). The catalysed reaction is S-(1-hydroxy-2-oxopropyl)-L-cysteinyl-[protein] + H2O = lactate + L-cysteinyl-[protein] + H(+). It catalyses the reaction N(omega)-(1-hydroxy-2-oxoethyl)-L-arginyl-[protein] + H2O = L-arginyl-[protein] + glycolate + H(+). It carries out the reaction N(6)-(1-hydroxy-2-oxoethyl)-L-lysyl-[protein] + H2O = glycolate + L-lysyl-[protein] + H(+). The enzyme catalyses S-(1-hydroxy-2-oxoethyl)-L-cysteinyl-[protein] + H2O = glycolate + L-cysteinyl-[protein] + H(+). The catalysed reaction is N(2)-(1-hydroxy-2-oxopropyl)-dGTP + H2O = lactate + dGTP + H(+). It catalyses the reaction N(2)-(1-hydroxy-2-oxopropyl)-GTP + H2O = lactate + GTP + H(+). It carries out the reaction N(2)-(1-hydroxy-2-oxopropyl)-GDP + H2O = lactate + GDP + H(+). The enzyme catalyses N(2)-(1-hydroxy-2-oxopropyl)-GMP + H2O = lactate + GMP + H(+). The catalysed reaction is N(2)-(1-hydroxy-2-oxoethyl)-dGTP + H2O = dGTP + glycolate + H(+). It catalyses the reaction N(2)-(1-hydroxy-2-oxoethyl)-GTP + H2O = glycolate + GTP + H(+). It carries out the reaction N(2)-(1-hydroxy-2-oxoethyl)-GDP + H2O = glycolate + GDP + H(+). The enzyme catalyses N(2)-(1-hydroxy-2-oxoethyl)-GMP + H2O = glycolate + GMP + H(+). The catalysed reaction is an N(2)-(1-hydroxy-2-oxopropyl)-guanosine in RNA + H2O = a guanosine in RNA + lactate + H(+). It catalyses the reaction an N(2)-(1-hydroxy-2-oxopropyl)-2'-deoxyguanosine in DNA + H2O = a 2'-deoxyguanosine in DNA + lactate + H(+). It carries out the reaction an N(2)-(1-hydroxy-2-oxoethyl)-guanosine in RNA + H2O = a guanosine in RNA + glycolate + H(+). The enzyme catalyses an N(2)-(1-hydroxy-2-oxoethyl)-2'-deoxyguanosine in DNA + H2O = a 2'-deoxyguanosine in DNA + glycolate + H(+). In terms of biological role, protein and nucleotide deglycase that catalyzes the deglycation of the Maillard adducts formed between amino groups of proteins or nucleotides and reactive carbonyl groups of glyoxals. Thus, functions as a protein deglycase that repairs methylglyoxal- and glyoxal-glycated proteins, and releases repaired proteins and lactate or glycolate, respectively. Deglycates cysteine, arginine and lysine residues in proteins, and thus reactivates these proteins by reversing glycation by glyoxals. Acts on early glycation intermediates (hemithioacetals and aminocarbinols), preventing the formation of Schiff bases and advanced glycation endproducts (AGE). Also functions as a nucleotide deglycase able to repair glycated guanine in the free nucleotide pool (GTP, GDP, GMP, dGTP) and in DNA and RNA. Is thus involved in a major nucleotide repair system named guanine glycation repair (GG repair), dedicated to reversing methylglyoxal and glyoxal damage via nucleotide sanitization and direct nucleic acid repair. Plays an important role in protecting cells from carbonyl stress. The protein is Protein/nucleic acid deglycase HchA of Escherichia coli O45:K1 (strain S88 / ExPEC).